We begin with the raw amino-acid sequence, 514 residues long: MEEQREILEQLKKTLQMLTVEPSKNNQIANEEKEKKENENSWCILEHNYEDIAQEFIDFIYKNPTTYHVVSFFAELLDKHNFKYLSEKSNWQDSIGEDGGKFYTIRNGTNLSAFILGKNWRAEKGVGVIGSHVDALTVKLKPVSFKDTAEGYGRIAVAPYGGTLNELWLDRDLGIGGRLLYKKKGTNEIKSALVDSTPLPVCRIPSLAPHFGKPAEGPFDKEDQTIPVIGFPTPDEEGNEPPTDDEKKSPLFGKHCIHLLRYVAKLAGVEVSELIQMDLDLFDVQKGTIGGIGKHFLFAPRLDDRLCSFAAMIALICYAKDVNTEESDLFSTVTLYDNEEIGSLTRQGAKGGLLESVVERSSSAFTKKPVDLHTVWANSIILSADVNHLYNPNFPEVYLKNHFPVPNVGITLSLDPNGHMATDVVGTALVEELARRNGDKVQYFQIKNNSRSGGTIGPSLASQTGARTIDLGIAQLSMHSIRAATGSKDVGLGVKFFNGFFKHWRSVYDEFGEL.

Residues 1 to 45 constitute a propeptide, required for vacuolar localization. Mediates aggregation and vesicle formation in Cvt pathway; it reads MEEQREILEQLKKTLQMLTVEPSKNNQIANEEKEKKENENSWCIL. Asparagine 107 and asparagine 110 each carry an N-linked (GlcNAc...) asparagine glycan. Residue histidine 132 coordinates Zn(2+). Histidine 210 lines the substrate pocket. Residues aspartate 303, glutamate 339, and glutamate 340 each coordinate Zn(2+). Glutamate 339 contacts substrate. Serine 356 carries the post-translational modification Phosphoserine. Aspartate 385 contributes to the Zn(2+) binding site. Substrate-binding residues include aspartate 385 and histidine 388. Residue asparagine 448 is glycosylated (N-linked (GlcNAc...) asparagine). Histidine 479 lines the Zn(2+) pocket.

It belongs to the peptidase M18 family. As to quaternary structure, homododecamer. The precursor form of aminopeptidase 1 (prApe1) assembles into dodecamers and further aggregates into higher multimers (the Ape1 complex) in the cytoplasm. The Ape1 complex is disaggregated in the vacuolar lumen, but mature aminopeptidase 1 (mApe1) retains its dodecameric form. Dodecamer assembly in the cytoplasm is essential for formation of an enzymatically active complex. If cytoplasmic homododecamerization of prApe1 is disturbed in mutants, homododecamers of mApe1 will form in the vacuole, but they are enzymatically inactive. Interacts with ATG19. The cofactor is Zn(2+). In terms of processing, synthesized in a precursor form (prApe1) that has an amino-terminal propeptide. The N-terminal extension of the 61 kDa precursor is proteolytically processed in two sequential steps. The first step involves proteinase A (PrA/PEP4) and produces a 55 kDa unstable intermediate (iAPI). The second step involves proteinase B (PrB/PRB1) and converts iAPI into the 50 kDa stable, mature enzyme (mApe1).

It localises to the vacuole. The enzyme catalyses Release of an N-terminal amino acid, preferably a neutral or hydrophobic one, from a polypeptide. Aminoacyl-arylamides are poor substrates.. Strongly and specifically activated by Cl(-) and Br(-), which act as positive allosteric effectors. Inactivated by metal-chelating agents. Its function is as follows. Resident vacuolar enzyme that catalyzes the removal of amino acids from the N-terminus of peptides and proteins. Also acts as the major cargo protein of the cytoplasm-to-vacuole targeting (Cvt) pathway. The precursor form of aminopeptidase 1 (prApe1) assembles into dodecamers and the propeptide mediates the aggregation of dodecamers into higher multimers. The multimers are then recognized via the propeptide by their receptor ATG19, and ATG19 further interacts with ATG11, which tethers the APE1-ATG19 complex to the pre-autophagosomal structure (PAS). The cargo-receptor complex (also Cvt complex) is selectively enwrapped by a double-membrane structure termed the Cvt vesicle under vegetative growth conditions and by a similar but larger double-membrane structure termed the autophagosome under nitrogen starvation conditions. The Cvt vesicle or the autophagosome fuses with the vacuolar membrane and release its content in the vacuolar lumen. In the vacuole, prApe1 is processed into mature aminopeptidase 1 (mApe1). In Saccharomyces cerevisiae (strain ATCC 204508 / S288c) (Baker's yeast), this protein is Vacuolar aminopeptidase 1.